A 554-amino-acid chain; its full sequence is uncharacterized protein (554 aa).

A run of 5 helical transmembrane segments spans residues 13 to 31 (SVAH…GVYL), 36 to 58 (IFGV…HFGF), 73 to 92 (LILF…FSSF), 99 to 121 (LNLL…YYLW), and 161 to 183 (IALG…IIAI). 2 RCK C-terminal domains span residues 199-281 (KTQS…FIGK) and 282-366 (EVEL…VLGN). A run of 4 helical transmembrane segments spans residues 376-395 (IVTI…LPIA), 405-422 (LGLA…GRFG), 442-464 (IGIV…QTVV), and 468-490 (GLLY…GAIA).

Belongs to the AAE transporter (TC 2.A.81) family.

The protein localises to the cell membrane. This is an uncharacterized protein from Bacteroides thetaiotaomicron (strain ATCC 29148 / DSM 2079 / JCM 5827 / CCUG 10774 / NCTC 10582 / VPI-5482 / E50).